The primary structure comprises 203 residues: tRNA (pseudouridine(54)-N(1))-methyltransferase (203 aa).

2 residues coordinate S-adenosyl-L-methionine: L135 and G156.

This sequence belongs to the methyltransferase superfamily. TrmY family. Homodimer.

It localises to the cytoplasm. The catalysed reaction is pseudouridine(54) in tRNA + S-adenosyl-L-methionine = N(1)-methylpseudouridine(54) in tRNA + S-adenosyl-L-homocysteine + H(+). Its function is as follows. Specifically catalyzes the N1-methylation of pseudouridine at position 54 (Psi54) in tRNAs. The sequence is that of tRNA (pseudouridine(54)-N(1))-methyltransferase from Thermococcus onnurineus (strain NA1).